Here is a 444-residue protein sequence, read N- to C-terminus: tRNA pseudouridine synthase Pus10 (444 aa).

Residue Asp-265 is the Nucleophile of the active site. Tyr-333 and Tyr-405 together coordinate substrate.

It belongs to the pseudouridine synthase Pus10 family.

The enzyme catalyses uridine(54) in tRNA = pseudouridine(54) in tRNA. It catalyses the reaction uridine(55) in tRNA = pseudouridine(55) in tRNA. Its function is as follows. Responsible for synthesis of pseudouridine from uracil-54 and uracil-55 in the psi GC loop of transfer RNAs. The protein is tRNA pseudouridine synthase Pus10 of Thermofilum pendens (strain DSM 2475 / Hrk 5).